A 240-amino-acid chain; its full sequence is uncharacterized protein (240 aa).

3 consecutive transmembrane segments (helical) span residues 12–32 (ICIH…ILMS), 66–86 (IQVL…FVLV), and 89–109 (ISGY…IYFF). 2 N-linked (GlcNAc...) asparagine; by host glycosylation sites follow: asparagine 129 and asparagine 157.

The protein localises to the membrane. This is an uncharacterized protein from Acanthamoeba polyphaga mimivirus (APMV).